The sequence spans 871 residues: MYAGAGPVLVPPTPTPPLPMPAYTFKPPPRPDFGTSGRTIKLQANFFEMDIPKIEIYHYEIDIKPEKCPRRVNREIVEHMVQHFKAQIFGDRKPVFDGRKNLYTAMPLPIARDKQVELEVTLPGEGKDRIFKVAIKWMACVSLQALHDALSGRLPSVPFETIQALDVVMRHLPSMRYTPVGRSFFTASEGCANPLGGGREVWFGFHQSVRPSLWKMMLNIDVSATAFYKAQPVIEFMCEVLDFKSIEEQQKPLTDSQRVKFTKEIKGLKVEITHCGQMKRKYRVCNVTRRPASHQTFPLQQESGQTVECTVAQYFKDRHKLVLRYPHLPCLQVGQEQKHTYLPLEVCNIVAGQRCIKKLTDNQTSTMIRATARSAPDRQEEISKLMRSASFNTDPFVREFGIMVKDDMTDVTGRVLQPPSILYGGRVWEEPNAPLNKAIATPVQGVWDMRNKQFHTGIEIKVWAIACFAPQRQCTEVHLKTFTEQLRKISRDAGMPIQGQPCFCKYAQGADSVEPMFRHLKNTYTGLQLVVVILPGKTPVYAEVKRVGDTVLGMATQCVQMKNVQRTTPQTLSNLCLKINVKLGGVNNILLPQGRPPVFQQPVIFLGADVTHPPAGDGKKPSIAAVVGSMDAHPNRYCATVRVQQHRQEIIQDLSAMVRELLIQFYKSTRFKPTRIIFYRDGVSEGQFQQVLHHELLAIREACIKLEKDYQPGITFIVVQKRHHTRLFCTDRNERVGKSGNIPAGTTVDTKITHPSEFDFYLCSHAGIQGTSRPSHYHVLWDDNRFSSDELQILTYQLCHTYVRCTRSVSIPAPAYYAHLVAFRARYHLVDKEHDSAEGSHTSGQSNGRDQQALAKAVQVHQDTLRTMYFA.

Residues 232–351 (PVIEFMCEVL…LPLEVCNIVA (120 aa)) enclose the PAZ domain. Interaction with guide RNA stretches follow at residues 314–319 (YFKDRH) and 536–578 (GKTP…LCLK). In terms of domain architecture, Piwi spans 529 to 830 (LVVVILPGKT…VAFRARYHLV (302 aa)). An interaction with GW182 family members region spans residues 599-602 (FQQP). An a divalent metal cation-binding site is contributed by Asp609. Residues 662-672 (LIQFYKSTRFK) form an interaction with GW182 family members region. Residue Asp681 coordinates a divalent metal cation. Interaction with guide RNA stretches follow at residues 721-722 (KR), 765-773 (HAGIQGTSR), and 802-824 (YVRC…VAFR). Residue His819 coordinates a divalent metal cation. Residues 834-856 (HDSAEGSHTSGQSNGRDQQALAK) are disordered. Residues 839–850 (GSHTSGQSNGRD) show a composition bias toward polar residues.

This sequence belongs to the argonaute family. Ago subfamily. Component of the RISC loading complex (RLC), or micro-RNA (miRNA) loading complex (miRLC), which is composed of dicer1, ago2 and tarbp2. Note that the trimeric RLC/miRLC is also referred to as RISC. Mg(2+) is required as a cofactor. Requires Mn(2+) as cofactor.

It localises to the cytoplasm. It is found in the P-body. It carries out the reaction Endonucleolytic cleavage to 5'-phosphomonoester.. Its function is as follows. Required for RNA-mediated gene silencing (RNAi) by the RNA-induced silencing complex (RISC). The 'minimal RISC' appears to include ago2 bound to a short guide RNA such as a microRNA (miRNA) or short interfering RNA (siRNA). These guide RNAs direct RISC to complementary mRNAs that are targets for RISC-mediated gene silencing. The precise mechanism of gene silencing depends on the degree of complementarity between the miRNA or siRNA and its target. Binding of RISC to a perfectly complementary mRNA generally results in silencing due to endonucleolytic cleavage of the mRNA specifically by ago2. Binding of RISC to a partially complementary mRNA results in silencing through inhibition of translation, and this is independent of endonuclease activity. The inhibition of translational initiation leads to the accumulation of the affected mRNA in cytoplasmic processing bodies (P-bodies), where mRNA degradation may subsequently occur. In Xenopus tropicalis (Western clawed frog), this protein is Protein argonaute-2 (ago2).